A 152-amino-acid polypeptide reads, in one-letter code: Large ribosomal subunit protein bL21 (152 aa).

The tract at residues 115–152 (VTSISNGEKPKKATTSAKPNTKKPSTAVKSSKVEKTPE) is disordered. Residues 127–143 (ATTSAKPNTKKPSTAVK) show a composition bias toward polar residues.

This sequence belongs to the bacterial ribosomal protein bL21 family. In terms of assembly, part of the 50S ribosomal subunit. Contacts protein L20.

Functionally, this protein binds to 23S rRNA in the presence of protein L20. This is Large ribosomal subunit protein bL21 from Prochlorococcus marinus (strain SARG / CCMP1375 / SS120).